A 119-amino-acid chain; its full sequence is Inner membrane protein YijD (119 aa).

The Cytoplasmic portion of the chain corresponds to methionine 1–arginine 8. The helical transmembrane segment at glycine 9–leucine 28 threads the bilayer. At phenylalanine 29 to serine 31 the chain is on the periplasmic side. The helical transmembrane segment at isoleucine 32 to leucine 50 threads the bilayer. Residues histidine 51–valine 61 are Cytoplasmic-facing. A helical membrane pass occupies residues glycine 62 to alanine 84. Residues glutamate 85 to aspartate 88 are Periplasmic-facing. Residues isoleucine 89–alanine 108 traverse the membrane as a helical segment. Topologically, residues lysine 109–glutamate 119 are cytoplasmic.

The protein resides in the cell inner membrane. In Escherichia coli O6:H1 (strain CFT073 / ATCC 700928 / UPEC), this protein is Inner membrane protein YijD (yijD).